The primary structure comprises 912 residues: Androgen receptor (912 aa).

The modulating stretch occupies residues 1–550 (MEVQLGLGRV…PIDYYFPPQK (550 aa)). Residues 1-579 (MEVQLGLGRV…GSCKVFFKRA (579 aa)) are interaction with ZNF318. Disordered stretches follow at residues 35-156 (QNPG…GPTF) and 204-236 (QQQQEVVSEGGSSGRAREAAGAPTSSKDSYLGG). A Phosphoserine; by CDK9 modification is found at S69. Phosphoserine is present on S82. Over residues 204–213 (QQQQEVVSEG) the composition is skewed to low complexity. Positions 226-236 (PTSSKDSYLGG) are enriched in polar residues. Residue Y233 is modified to Phosphotyrosine; by CSK. Residue S266 is modified to Phosphoserine. Y277 carries the post-translational modification Phosphotyrosine; by CSK and TNK2. Y315, Y354, Y365, and Y370 each carry phosphotyrosine; by CSK. The residue at position 371 (Y371) is a Phosphotyrosine; by CSK and TNK2. A disordered region spans residues 375–394 (LSLAGPPPPPPSPHPHARIK). Residues 379 to 388 (GPPPPPPSPH) show a composition bias toward pro residues. K394 is covalently cross-linked (Glycyl lysine isopeptide (Lys-Gly) (interchain with G-Cter in SUMO)). At Y401 the chain carries Phosphotyrosine; by CSK. The disordered stretch occupies residues 452–490 (LYGPCGGSGGGGTGESVSVTPYGYTRPQQGLTGQEGDFP). The span at 455 to 465 (PCGGSGGGGTG) shows a compositional bias: gly residues. A Glycyl lysine isopeptide (Lys-Gly) (interchain with G-Cter in SUMO) cross-link involves residue K513. Y527 and Y544 each carry phosphotyrosine; by CSK. Residues 544-911 (YYFPPQKTCL…GKVKPIYFHT (368 aa)) form an interaction with LPXN region. The nuclear receptor DNA-binding region spans 551 to 624 (TCLICGDEAS…AGMTLGARRL (74 aa)). 2 consecutive NR C4-type zinc fingers follow at residues 552 to 572 (CLICGDEASGCHYGALTCGSC) and 588 to 612 (CASRNDCTIDKFRRKNCPPCRLRKC). The interval 564-654 (YGALTCGSCK…TEETTQKLTV (91 aa)) is interaction with HIPK3. Positions 584–911 (QKYLCASRND…GKVKPIYFHT (328 aa)) are interaction with CCAR1. The segment at 617–911 (MTLGARRLKK…GKVKPIYFHT (295 aa)) is interaction with KAT7. Position 643 is a phosphoserine; by STK4/MST1 (S643). Residues 661 to 892 (ECQPIFLNVL…DFPEMMAEII (232 aa)) form the NR LBD domain. 17beta-hydroxy-5alpha-androstan-3-one is bound by residues N698 and R745. Glycyl lysine isopeptide (Lys-Gly) (interchain with G-Cter in ubiquitin) cross-links involve residues K838 and K840. T870 is a binding site for 17beta-hydroxy-5alpha-androstan-3-one. Y908 is subject to Phosphotyrosine; by CSK.

The protein belongs to the nuclear hormone receptor family. NR3 subfamily. In terms of assembly, binds DNA as a homodimer. Part of a ternary complex containing AR, EFCAB6/DJBP and PARK7. Interacts with HIPK3 and NR0B2 in the presence of androgen. The ligand binding domain interacts with KAT7/HBO1 in the presence of dihydrotestosterone. Interacts with EFCAB6/DJBP, PQBP1, RANBP9, RBAK, SPDEF, SRA1, TGFB1I1 and RREB1. Interacts with ZMIZ1/ZIMP10 and ZMIZ2/ZMIP7 which both enhance its transactivation activity. Interacts with SLC30A9 and RAD54L2/ARIP4. Interacts with MACROD1 (via macro domain). Interacts via the ligand-binding domain with LXXLL and FXXLF motifs from NCOA1, NCOA2, NCOA3 and MAGEA11. Interacts (via nuclear receptor DNA binding domain and nuclear receptor ligand binding domain) with NCOA4. The AR N-terminal poly-Gln region binds Ran resulting in enhancement of AR-mediated transactivation. Ran-binding decreases as the poly-Gln length increases. Interacts with HIP1 (via coiled coil domain). Interacts (via ligand-binding domain) with TRIM68. Interacts with TNK2. Interacts with USP26. Interacts with RNF6. Interacts (regulated by RNF6 probably through polyubiquitination) with RNF14; regulates AR transcriptional activity. Interacts with PRMT2 and TRIM24. Interacts with RACK1. Interacts with RANBP10; this interaction enhances dihydrotestosterone-induced AR transcriptional activity. Interacts with PRPF6 in a hormone-independent way; this interaction enhances dihydrotestosterone-induced AR transcriptional activity. Interacts with STK4/MST1. Interacts with ZIPK/DAPK3. Interacts with LPXN. Interacts with MAK. Part of a complex containing AR, MAK and NCOA3. Interacts with CRY1. Interacts with CCAR1 and GATA2. Interacts with ZNF318. Interacts with BUD31. Interacts with ARID4A. Interacts with ARID4B. Interacts (via NR LBD domain) with ZBTB7A; the interaction is direct and androgen-dependent. Interacts with NCOR1. Interacts with NCOR2. Interacts with CRY2 in a ligand-dependent manner. Post-translationally, phosphorylation by TNK2 enhances the DNA-binding and transcriptional activity. Phosphorylation at Ser-69 by CDK9 regulates AR promoter selectivity and cell growth. In terms of processing, sumoylated on Lys-394 (major) and Lys-513. Ubiquitinated. Deubiquitinated by USP26. 'Lys-6' and 'Lys-27'-linked polyubiquitination by RNF6 modulates AR transcriptional activity and specificity. Palmitoylated by ZDHHC7 and ZDHHC21. Palmitoylation is required for plasma membrane targeting and for rapid intracellular signaling via ERK and AKT kinases and cAMP generation.

It localises to the nucleus. It is found in the cytoplasm. Its function is as follows. Steroid hormone receptors are ligand-activated transcription factors that regulate eukaryotic gene expression and affect cellular proliferation and differentiation in target tissues. Transcription factor activity is modulated by bound coactivator and corepressor proteins like ZBTB7A that recruits NCOR1 and NCOR2 to the androgen response elements/ARE on target genes, negatively regulating androgen receptor signaling and androgen-induced cell proliferation. Transcription activation is also down-regulated by NR0B2. Activated, but not phosphorylated, by HIPK3 and ZIPK/DAPK3. This is Androgen receptor (AR) from Crocuta crocuta (Spotted hyena).